Reading from the N-terminus, the 378-residue chain is Histidinol-phosphate aminotransferase (378 aa).

The tract at residues 1–20 (MSVSAKETQRHPARPEPRPG) is disordered. Residues 7–17 (ETQRHPARPEP) are compositionally biased toward basic and acidic residues. Lys-232 carries the N6-(pyridoxal phosphate)lysine modification.

This sequence belongs to the class-II pyridoxal-phosphate-dependent aminotransferase family. Histidinol-phosphate aminotransferase subfamily. In terms of assembly, homodimer. Pyridoxal 5'-phosphate serves as cofactor.

The enzyme catalyses L-histidinol phosphate + 2-oxoglutarate = 3-(imidazol-4-yl)-2-oxopropyl phosphate + L-glutamate. Its pathway is amino-acid biosynthesis; L-histidine biosynthesis; L-histidine from 5-phospho-alpha-D-ribose 1-diphosphate: step 7/9. The polypeptide is Histidinol-phosphate aminotransferase (Azorhizobium caulinodans (strain ATCC 43989 / DSM 5975 / JCM 20966 / LMG 6465 / NBRC 14845 / NCIMB 13405 / ORS 571)).